We begin with the raw amino-acid sequence, 885 residues long: Cadherin-related family member 3 (885 aa).

The signal sequence occupies residues 1 to 19 (MQEAIILLALLGAMSGGEA). The Extracellular portion of the chain corresponds to 20 to 713 (LHLILLPATG…VYSPSAWYVP (694 aa)). Cadherin domains lie at 23 to 132 (ILLP…PPQF), 136 to 236 (LAEG…VPRF), 237 to 344 (TSPT…NPAT), 346 to 466 (QKFT…RPSY), 462 to 566 (DRPS…KPIC), and 567 to 695 (TPNS…RPRV). 2 N-linked (GlcNAc...) asparagine glycosylation sites follow: Asn-186 and Asn-257. Residue Asn-624 is glycosylated (N-linked (GlcNAc...) asparagine). The helical transmembrane segment at 714–734 (FVITLGSILLLGLLVYLVVLL) threads the bilayer. At 735–885 (AKAIHRHCPC…RAYPKPHPGK (151 aa)) the chain is on the cytoplasmic side. Residues 808-885 (MPKWKESSHQ…RAYPKPHPGK (78 aa)) form a disordered region.

In terms of assembly, (Microbial infection) Interacts (via N-terminus) with human rhinovirus C capsid proteins VP1, VP2 and VP3. As to expression, expressed in bronchial epithelium from adults and in fetal lung tissue.

It is found in the cell membrane. Its function is as follows. Cadherins are calcium-dependent cell adhesion proteins. They preferentially interact with themselves in a homophilic manner in connecting cells; cadherins may thus contribute to the sorting of heterogeneous cell types. In terms of biological role, (Microbial infection) Acts as a receptor for human rhinovirus C. The chain is Cadherin-related family member 3 (CDHR3) from Homo sapiens (Human).